The sequence spans 773 residues: Cadherin-5 (773 aa).

The signal sequence occupies residues 1-18 (MKKLILLFSLFLAPAFSY). The propeptide occupies 19–40 (KENQKINQNFSSNNTSHKRLKR). 3 N-linked (GlcNAc...) asparagine glycosylation sites follow: Asn27, Asn31, and Asn32. 5 Cadherin domains span residues 39–144 (KRDW…APIF), 145–251 (VQKI…FPVF), 252–366 (KHPS…PPVF), 367–474 (TKLS…APEL), and 474–582 (LVYP…DFTF). Over 41-595 (DWIWNRMHIR…RAKQVGVSVQ (555 aa)) the chain is Extracellular. Residues Glu51, Glu52, Asp102, and Glu104 each contribute to the Ca(2+) site. N-linked (GlcNAc...) asparagine glycosylation is present at Asn121. Positions 136, 137, 138, 139, and 140 each coordinate Ca(2+). An N-linked (GlcNAc...) asparagine glycan is attached at Asn150. 4 residues coordinate Ca(2+): Asp170, Asp172, His179, and Asp224. N-linked (GlcNAc...) asparagine glycosylation is found at Asn263, Asn437, Asn519, and Asn531. Residues 596-617 (ALVAIFICIFTIIAVIALLILL) form a helical membrane-spanning segment. Residues 618-773 (RKRHKKDLSG…GSEPNEDFVY (156 aa)) are Cytoplasmic-facing.

Post-translationally, N-glycosylated. In terms of processing, O-glycosylated.

The protein localises to the cell junction. It is found in the adherens junction. The protein resides in the cell membrane. Its subcellular location is the cytoplasm. Functionally, cadherins are calcium-dependent cell adhesion proteins. They preferentially interact with themselves in a homophilic manner in connecting cells; cadherins may thus contribute to the sorting of heterogeneous cell types. This cadherin may play a important role in endothelial cell biology through control of the cohesion and organization of the intercellular junctions. Plays a role in coupling actin fibers to cell junctions in endothelial cells. Associates with CTNND1/p120-catenin to control CADH5 endocytosis. This Gallus gallus (Chicken) protein is Cadherin-5.